The chain runs to 331 residues: Phenylalanine--tRNA ligase alpha subunit (331 aa).

Mg(2+) is bound at residue glutamate 252.

It belongs to the class-II aminoacyl-tRNA synthetase family. Phe-tRNA synthetase alpha subunit type 1 subfamily. In terms of assembly, tetramer of two alpha and two beta subunits. Requires Mg(2+) as cofactor.

The protein localises to the cytoplasm. The catalysed reaction is tRNA(Phe) + L-phenylalanine + ATP = L-phenylalanyl-tRNA(Phe) + AMP + diphosphate + H(+). The sequence is that of Phenylalanine--tRNA ligase alpha subunit from Xanthomonas axonopodis pv. citri (strain 306).